Reading from the N-terminus, the 862-residue chain is Rho guanine nucleotide exchange factor 7 (862 aa).

Positions 1 to 112 (MNSAEQTVTW…SLVTLNKVTA (112 aa)) constitute a Calponin-homology (CH) domain. 5 positions are modified to phosphoserine: serine 132, serine 155, serine 164, serine 228, and serine 236. The region spanning 163-222 (NSQLVVRAKFNFQQTNEDELSFSKGDVIHVTRVEEGGWWEGTHNGRTGWFPSNYVREIKP) is the SH3 domain. Residues 250-430 (YYNVVLQNIL…KNLSAQCQEV (181 aa)) form the DH domain. A PH domain is found at 452-557 (DIKTLGSVTY…WVEHLQKQTK (106 aa)). A Phosphoserine modification is found at serine 497. Disordered regions lie at residues 559–591 (TSVSNPTIKPHSVPSHTLPSHPLTPSSKHADSK), 657–679 (KTMKKLLPKRKPERKPSDEEFAV), and 728–748 (DQSSLDSLGRRSSLSRLEPSD). Polar residues predominate over residues 572 to 585 (PSHTLPSHPLTPSS). Residues 657 to 669 (KTMKKLLPKRKPE) are compositionally biased toward basic residues. Positions 670–679 (RKPSDEEFAV) are enriched in basic and acidic residues. Serine 673 is modified (phosphoserine). The segment covering 731–744 (SLDSLGRRSSLSRL) has biased composition (low complexity). Serine 776 carries the phosphoserine modification. A coiled-coil region spans residues 804 to 854 (KSLVDTVYALKDEVQELRQDNKKMKKSLEEEQRARKDLEKLVRKVLKNMND).

As to quaternary structure, interacts with PAK kinases through the SH3 domain. Interacts with unphosphorylated PAK1. Interacts with ITCH. Interacts with SCRIB; interaction is direct and may play a role in regulation of apoptosis. Interacts with GIT1 and TGFB1I1. Interacts with FRMPD4 (via N-terminus). Interacts with CaMK1. Interacts with BIN2. Interacts with PTK2/FAK1 and RAC1. Interacts with PARVB. Interacts with YWHAZ. Interacts (via PH domain) with NOX1 (via FAD-binding FR-type domain). Post-translationally, phosphorylated on Ser-673 by CaMK1; enhancement of GEF activity and downstream activation of RAC1. Phosphorylated by PTK2/FAK1; this promotes interaction with RAC1. As to expression, seems to be expressed in the central nervous system. Isoform B, isoform C and isoform E are expressed with highest levels in brain and testis.

It is found in the cell junction. The protein localises to the focal adhesion. Its subcellular location is the cell projection. It localises to the ruffle. The protein resides in the cytoplasm. It is found in the cell cortex. The protein localises to the lamellipodium. Acts as a RAC1 guanine nucleotide exchange factor (GEF) and can induce membrane ruffling. May function as a positive regulator of apoptosis. Functions in cell migration, attachment and cell spreading. Promotes targeting of RAC1 to focal adhesions. Downstream of NMDA receptors and CaMKK-CaMK1 signaling cascade, promotes the formation of spines and synapses in hippocampal neurons. In Mus musculus (Mouse), this protein is Rho guanine nucleotide exchange factor 7 (Arhgef7).